A 203-amino-acid polypeptide reads, in one-letter code: Proteasome subunit beta 2 (203 aa).

Positions 1 to 9 (MGEEVSIGA) are cleaved as a propeptide — removed in mature form; by autocatalysis. The active-site Nucleophile is the threonine 10.

The protein belongs to the peptidase T1B family. As to quaternary structure, the 20S proteasome core is composed of 14 alpha and 14 beta subunits that assemble into four stacked heptameric rings, resulting in a barrel-shaped structure. The two inner rings, each composed of seven catalytic beta subunits, are sandwiched by two outer rings, each composed of seven alpha subunits. The catalytic chamber with the active sites is on the inside of the barrel. Has a gated structure, the ends of the cylinder being occluded by the N-termini of the alpha-subunits. Is capped at one or both ends by the proteasome regulatory ATPase, PAN.

The protein resides in the cytoplasm. It carries out the reaction Cleavage of peptide bonds with very broad specificity.. The formation of the proteasomal ATPase PAN-20S proteasome complex, via the docking of the C-termini of PAN into the intersubunit pockets in the alpha-rings, triggers opening of the gate for substrate entry. Interconversion between the open-gate and close-gate conformations leads to a dynamic regulation of the 20S proteasome proteolysis activity. Its function is as follows. Component of the proteasome core, a large protease complex with broad specificity involved in protein degradation. This chain is Proteasome subunit beta 2, found in Pyrobaculum calidifontis (strain DSM 21063 / JCM 11548 / VA1).